Here is a 683-residue protein sequence, read N- to C-terminus: Hexamerin 70b (683 aa).

Residues Met1 to Ala21 form the signal peptide. Residues Val32–Lys153 form the Hemocyanin N-terminal domain. Positions Pro159–Tyr428 constitute a Hemocyanin middle domain. An N-linked (GlcNAc...) asparagine glycan is attached at Asn203. A Hemocyanin C-terminal domain is found at Lys437–His673.

It belongs to the hemocyanin/hexamerin family. As to quaternary structure, probable homohexamer. Expressed in the fat body and secreted into the hemolymph (at protein level). Present in trophocytes and oenocytes of the fat body (at protein level).

The protein localises to the secreted. Its subcellular location is the nucleus. It is found in the cytoplasm. It localises to the cytoplasmic granule. In terms of biological role, storage protein that may function as a nutrient supply to compensate for lack of dietary proteins during metamorphosis and egg production. In Apis mellifera (Honeybee), this protein is Hexamerin 70b.